A 468-amino-acid polypeptide reads, in one-letter code: Probable cytosol aminopeptidase (468 aa).

Residues K242 and D247 each contribute to the Mn(2+) site. K254 is a catalytic residue. 3 residues coordinate Mn(2+): D265, D324, and E326. R328 is a catalytic residue.

This sequence belongs to the peptidase M17 family. It depends on Mn(2+) as a cofactor.

The protein localises to the cytoplasm. The enzyme catalyses Release of an N-terminal amino acid, Xaa-|-Yaa-, in which Xaa is preferably Leu, but may be other amino acids including Pro although not Arg or Lys, and Yaa may be Pro. Amino acid amides and methyl esters are also readily hydrolyzed, but rates on arylamides are exceedingly low.. It catalyses the reaction Release of an N-terminal amino acid, preferentially leucine, but not glutamic or aspartic acids.. Presumably involved in the processing and regular turnover of intracellular proteins. Catalyzes the removal of unsubstituted N-terminal amino acids from various peptides. The polypeptide is Probable cytosol aminopeptidase (Neisseria meningitidis serogroup A / serotype 4A (strain DSM 15465 / Z2491)).